Here is a 115-residue protein sequence, read N- to C-terminus: MALSPFLAAVIPLVLLLSRAPPSADTRTTGHLCGKDLVNALYIACGVRGFFYDPTKMKRDTGALAAFLPLAYAEDNESQDDESIGINEVLKSKRGIVEQCCHKRCSIYDLENYCN.

A signal peptide spans 1 to 26 (MALSPFLAAVIPLVLLLSRAPPSADT). 3 disulfide bridges follow: Cys-33/Cys-101, Cys-45/Cys-114, and Cys-100/Cys-105. The propeptide at 60-92 (DTGALAAFLPLAYAEDNESQDDESIGINEVLKS) is c peptide.

It belongs to the insulin family. In terms of assembly, heterodimer of a B chain and an A chain linked by two disulfide bonds.

It is found in the secreted. Functionally, insulin decreases blood glucose concentration. It increases cell permeability to monosaccharides, amino acids and fatty acids. It accelerates glycolysis, the pentose phosphate cycle, and glycogen synthesis in liver. This Myxine glutinosa (Atlantic hagfish) protein is Insulin (ins).